A 181-amino-acid polypeptide reads, in one-letter code: CDP-diacylglycerol--glycerol-3-phosphate 3-phosphatidyltransferase (181 aa).

4 helical membrane passes run 8–28, 35–55, 64–84, and 148–168; these read PNYLTIARIMVIPVIILLFYI, KLGALLFVLASITDFFDGYIA, FGKMFDPIADKLLVGCVTIML, and IIYLDIVGEIILWIAAFLTII.

This sequence belongs to the CDP-alcohol phosphatidyltransferase class-I family.

The protein localises to the cell membrane. The catalysed reaction is a CDP-1,2-diacyl-sn-glycerol + sn-glycerol 3-phosphate = a 1,2-diacyl-sn-glycero-3-phospho-(1'-sn-glycero-3'-phosphate) + CMP + H(+). Its pathway is phospholipid metabolism; phosphatidylglycerol biosynthesis; phosphatidylglycerol from CDP-diacylglycerol: step 1/2. In terms of biological role, this protein catalyzes the committed step to the synthesis of the acidic phospholipids. The protein is CDP-diacylglycerol--glycerol-3-phosphate 3-phosphatidyltransferase (pgsA) of Rickettsia prowazekii (strain Madrid E).